A 136-amino-acid polypeptide reads, in one-letter code: UPF0299 membrane protein PM0880 (136 aa).

The next 4 membrane-spanning stretches (helical) occupy residues isoleucine 5–isoleucine 25, leucine 29–phenylalanine 49, tyrosine 67–phenylalanine 87, and valine 92–serine 112.

This sequence belongs to the UPF0299 family.

Its subcellular location is the cell inner membrane. This chain is UPF0299 membrane protein PM0880, found in Pasteurella multocida (strain Pm70).